The sequence spans 326 residues: N-acetyl-gamma-glutamyl-phosphate reductase (326 aa).

C155 is an active-site residue.

It belongs to the NAGSA dehydrogenase family. Type 1 subfamily.

The protein resides in the cytoplasm. The enzyme catalyses N-acetyl-L-glutamate 5-semialdehyde + phosphate + NADP(+) = N-acetyl-L-glutamyl 5-phosphate + NADPH + H(+). The protein operates within amino-acid biosynthesis; L-arginine biosynthesis; N(2)-acetyl-L-ornithine from L-glutamate: step 3/4. Catalyzes the NADPH-dependent reduction of N-acetyl-5-glutamyl phosphate to yield N-acetyl-L-glutamate 5-semialdehyde. The sequence is that of N-acetyl-gamma-glutamyl-phosphate reductase from Shewanella loihica (strain ATCC BAA-1088 / PV-4).